A 373-amino-acid chain; its full sequence is Anhydro-N-acetylmuramic acid kinase (373 aa).

Residue 12 to 19 (GTSLDGVD) participates in ATP binding.

It belongs to the anhydro-N-acetylmuramic acid kinase family.

The catalysed reaction is 1,6-anhydro-N-acetyl-beta-muramate + ATP + H2O = N-acetyl-D-muramate 6-phosphate + ADP + H(+). Its pathway is amino-sugar metabolism; 1,6-anhydro-N-acetylmuramate degradation. The protein operates within cell wall biogenesis; peptidoglycan recycling. In terms of biological role, catalyzes the specific phosphorylation of 1,6-anhydro-N-acetylmuramic acid (anhMurNAc) with the simultaneous cleavage of the 1,6-anhydro ring, generating MurNAc-6-P. Is required for the utilization of anhMurNAc either imported from the medium or derived from its own cell wall murein, and thus plays a role in cell wall recycling. This is Anhydro-N-acetylmuramic acid kinase from Salmonella newport (strain SL254).